The primary structure comprises 275 residues: Large ribosomal subunit protein uL2 (275 aa).

A disordered region spans residues 223–275 (GVVMNPVDHPHGGGEGRGKGHHPQSPWGVPAKGYKTRRGKRASDKFIVRRRNG). Residues 230–240 (DHPHGGGEGRG) are compositionally biased toward basic and acidic residues.

This sequence belongs to the universal ribosomal protein uL2 family. In terms of assembly, part of the 50S ribosomal subunit. Forms a bridge to the 30S subunit in the 70S ribosome.

Functionally, one of the primary rRNA binding proteins. Required for association of the 30S and 50S subunits to form the 70S ribosome, for tRNA binding and peptide bond formation. It has been suggested to have peptidyltransferase activity; this is somewhat controversial. Makes several contacts with the 16S rRNA in the 70S ribosome. In Fervidobacterium nodosum (strain ATCC 35602 / DSM 5306 / Rt17-B1), this protein is Large ribosomal subunit protein uL2.